Here is a 21-residue protein sequence, read N- to C-terminus: Dahlein-5.5 (21 aa).

As to expression, expressed by the skin dorsal glands.

Its subcellular location is the secreted. In terms of biological role, has no antimicrobial activity. Strongly inhibits the formation of NO by neuronal nitric oxide synthase at micromolar concentrations. This Ranoidea dahlii (Dahl's aquatic frog) protein is Dahlein-5.5.